The sequence spans 248 residues: 14-3-3 protein zeta (248 aa).

Belongs to the 14-3-3 family. As to quaternary structure, homodimer.

It localises to the cytoplasm. In terms of biological role, adapter protein implicated in the regulation of a large spectrum of both general and specialized signaling pathways. Binds to a large number of partners, usually by recognition of a phosphoserine or phosphothreonine motif. Binding generally results in the modulation of the activity of the binding partner. The sequence is that of 14-3-3 protein zeta (14-3-3zeta) from Aedes aegypti (Yellowfever mosquito).